A 352-amino-acid polypeptide reads, in one-letter code: Inner membrane protein YeeA (352 aa).

Residues 1-25 (MRADKSLSPFEIRVYRHYRIVHGTR) are Cytoplasmic-facing. The next 2 helical transmembrane spans lie at 26-46 (VALAFLLTFLIIRLFTIPEST) and 47-67 (WPLVTMVVIMGPISFWGNVVP). Residue arginine 68 is a topological domain, cytoplasmic. Residues 69 to 89 (AFERIGGTVLGSILGLIALQL) form a helical membrane-spanning segment. Position 90 (glutamate 90) is a topological domain, periplasmic. The helical transmembrane segment at 91-111 (LISLPLMLVWCAAAMFLCGWL) threads the bilayer. Residues 112 to 117 (ALGKKP) lie on the Cytoplasmic side of the membrane. The helical transmembrane segment at 118–138 (YQGLLIGVTLAIVVGSPTGEI) threads the bilayer. The Periplasmic portion of the chain corresponds to 139–147 (DTALWRSGD). The chain crosses the membrane as a helical span at residues 148 to 168 (VILGSLLAMLFTGIWPQRAFI). Residues 169–352 (HWRIQLAKSL…SNLICRALRK (184 aa)) lie on the Cytoplasmic side of the membrane.

It is found in the cell inner membrane. In Escherichia coli (strain K12), this protein is Inner membrane protein YeeA (yeeA).